The primary structure comprises 523 residues: Inosine-5'-monophosphate dehydrogenase 2 (523 aa).

CBS domains lie at 121-183 (FINN…VQDV) and 184-240 (MTKN…PLAS). Residues 278–280 (DSS) and 328–330 (GMG) contribute to the NAD(+) site. K(+)-binding residues include Gly-330 and Gly-332. Ser-333 lines the IMP pocket. Residue Cys-335 participates in K(+) binding. Cys-335 serves as the catalytic Thioimidate intermediate. IMP is bound by residues 368–370 (DGG), 391–392 (GG), and 415–419 (YRGMG). Arg-437 serves as the catalytic Proton acceptor. Gln-449 lines the IMP pocket. 3 residues coordinate K(+): Glu-508, Gly-509, and Gly-510.

It belongs to the IMPDH/GMPR family. Homotetramer. Seems to be able to form heterotetramers composed from more than 1 of the 3 IMPDH gene products (IMD2-4). The cofactor is K(+).

Its subcellular location is the cytoplasm. The catalysed reaction is IMP + NAD(+) + H2O = XMP + NADH + H(+). It participates in purine metabolism; XMP biosynthesis via de novo pathway; XMP from IMP: step 1/1. Its activity is regulated as follows. Mycophenolic acid (MPA) is a non-competitive inhibitor that prevents formation of the closed enzyme conformation by binding to the same site as the amobile flap. In contrast, mizoribine monophosphate (MZP) is a competitive inhibitor that induces the closed conformation. MPA is a potent inhibitor of mammalian IMPDHs but a poor inhibitor of the bacterial enzymes. MZP is a more potent inhibitor of bacterial IMPDH. In terms of biological role, catalyzes the conversion of inosine 5'-phosphate (IMP) to xanthosine 5'-phosphate (XMP), the first committed and rate-limiting step in the de novo synthesis of guanine nucleotides, and therefore plays an important role in the regulation of cell growth. In contrast to the other IMPDH alleles IMD3 and IMD4, the enzymatic activity of IMD2 seems to be intrinsically drug resistant. This Saccharomyces cerevisiae (strain ATCC 204508 / S288c) (Baker's yeast) protein is Inosine-5'-monophosphate dehydrogenase 2.